The following is a 58-amino-acid chain: UPF0391 membrane protein Maqu_2901 (58 aa).

2 consecutive transmembrane segments (helical) span residues 4 to 24 (WAIV…GGIA) and 28 to 48 (AGFA…SLVV).

The protein belongs to the UPF0391 family.

It is found in the cell membrane. The sequence is that of UPF0391 membrane protein Maqu_2901 from Marinobacter nauticus (strain ATCC 700491 / DSM 11845 / VT8) (Marinobacter aquaeolei).